The primary structure comprises 126 residues: Phosphoribosyl-AMP cyclohydrolase (126 aa).

Position 77 (Asp-77) interacts with Mg(2+). A Zn(2+)-binding site is contributed by Cys-78. Mg(2+) is bound by residues Asp-79 and Asp-81. Cys-95 and Cys-102 together coordinate Zn(2+).

This sequence belongs to the PRA-CH family. Homodimer. It depends on Mg(2+) as a cofactor. Requires Zn(2+) as cofactor.

It is found in the cytoplasm. It catalyses the reaction 1-(5-phospho-beta-D-ribosyl)-5'-AMP + H2O = 1-(5-phospho-beta-D-ribosyl)-5-[(5-phospho-beta-D-ribosylamino)methylideneamino]imidazole-4-carboxamide. It functions in the pathway amino-acid biosynthesis; L-histidine biosynthesis; L-histidine from 5-phospho-alpha-D-ribose 1-diphosphate: step 3/9. Catalyzes the hydrolysis of the adenine ring of phosphoribosyl-AMP. The polypeptide is Phosphoribosyl-AMP cyclohydrolase (Cellvibrio japonicus (strain Ueda107) (Pseudomonas fluorescens subsp. cellulosa)).